We begin with the raw amino-acid sequence, 160 residues long: 6-hydroxypseudooxynicotine dehydrogenase complex subunit beta (160 aa).

In terms of domain architecture, 2Fe-2S ferredoxin-type spans 4–80 (FRLTVEVNGV…NSRIETVESL (77 aa)). C42, C47, C50, C62, C101, C104, C137, and C139 together coordinate [2Fe-2S] cluster.

Heterohexamer of 2 alpha (kdhA), 2 beta (kdhB) and 2 gamma (kdhC) subunit. Dimer of heterotrimers. It depends on [2Fe-2S] cluster as a cofactor.

The catalysed reaction is 6-hydroxypseudooxynicotine + A + H2O = 2,6-dihydroxypseudooxynicotine + AH2. The protein operates within alkaloid degradation; nicotine degradation. In terms of biological role, molybdo-flavoprotein enzyme complex involved in nicotine degradation. The subunit gamma (large subunit) contains the substrate-binding sites, the subunit alpha (medium subunit) binds FAD and the subunit beta (small subunit) has a 2Fe-2S ferredoxin-type domain which binds 2 2Fe-2S clusters. This is 6-hydroxypseudooxynicotine dehydrogenase complex subunit beta (kdhB) from Paenarthrobacter nicotinovorans (Arthrobacter nicotinovorans).